A 760-amino-acid chain; its full sequence is MVLKAFFPTCCVSTDSGLLVGRWVPEQSSAVVLAVLHFPFIPIQVKQLLAQVRQASQVGVAVLGTWCHCRQEPEESLGRFLESLGAVFPHEPWLRLCRERGGTFWSCEATHRQAPTAPGAPGEDQVMLIFYDQRQVLLSQLHLPTVLPDRQAGATTASTGGLAAVFDTVARSEVLFRSDRFDEGPVRLSHWQSEGVEASILAELARRASGPICLLLASLLSLVSAVSACRVFKLWPLSFLGSKLSTCEQLRHRLEHLTLIFSTRKAENPAQLMRKANTVASVLLDVALGLMLLSWLHGRSRIGHLADALVPVADHVAEELQHLLQWLMGAPAGLKMNRALDQVLGRFFLYHIHLWISYIHLMSPFVEHILWHVGLSACLGLTVALSLLSDIIALLTFHIYCFYVYGARLYCLKIHGLSSLWRLFRGKKWNVLRQRVDSCSYDLDQLFIGTLLFTILLFLLPTTALYYLVFTLLRLLVVAVQGLIHLLVDLINSLPLYSLGLRLCRPYRLADKPTALQPRGAHLPPPQLWLPPQALLGRPVPQAVPWGAHLPLEAERGQAGLRELLARLAPPHGHSQPSALPGWHQLSWRMSCALWTLLCAPEHGRPCYHTLGLEVIGSEQMWGWPARLAALHHWHCLPWDPLPTCCGHHGGEHSNPRCPEHCPMPTLCTQVQRVRPPQQPQVEGWSPWGLPSGSALAVGVEGPCQDEPPSPRHPLAPSAEQHPASGGLKQSLTPVPSGPGPSLPEPHGVYLRMFPGEVAL.

Helical transmembrane passes span 278 to 298, 349 to 371, 378 to 400, 446 to 468, and 475 to 497; these read TVASVLLDVALGLMLLSWLHG, LYHIHLWISYIHLMSPFVEHILW, CLGLTVALSLLSDIIALLTFHIY, LFIGTLLFTILLFLLPTTALYYL, and LLVVAVQGLIHLLVDLINSLPLY. Residues 696-748 are disordered; sequence LAVGVEGPCQDEPPSPRHPLAPSAEQHPASGGLKQSLTPVPSGPGPSLPEPHG.

This sequence belongs to the PIGQ family. As to quaternary structure, component of the glycosylphosphatidylinositol-N-acetylglucosaminyltransferase (GPI-GnT) complex composed at least by PIGA, PIGC, PIGH, PIGP, PIGQ, PIGY and DPM2. Interacts with PIGA, PIGH and PIGC.

The protein localises to the membrane. The protein operates within glycolipid biosynthesis; glycosylphosphatidylinositol-anchor biosynthesis. Part of the glycosylphosphatidylinositol-N-acetylglucosaminyltransferase (GPI-GnT) complex that catalyzes the transfer of N-acetylglucosamine from UDP-N-acetylglucosamine to phosphatidylinositol and participates in the first step of GPI biosynthesis. The polypeptide is Phosphatidylinositol N-acetylglucosaminyltransferase subunit Q (Homo sapiens (Human)).